Reading from the N-terminus, the 478-residue chain is Transcript termination protein A18 (478 aa).

One can recognise a Helicase ATP-binding domain in the interval 98–254 (KVELKRPMYV…NDVINVSNSS (157 aa)). Residue 111 to 118 (LACGFGKT) coordinates ATP. The short motif at 204 to 207 (DESH) is the DESH box element. A Helicase C-terminal domain is found at 307–454 (ILDTIIYDFE…IITLAIEKLG (148 aa)).

It belongs to the helicase family. Poxviruses subfamily. Interacts with G2. Might be part of a transcription complex composed at least of G2, A18, and H5.

It localises to the virion. Its function is as follows. DNA helicase which seems to act as a postreplicative transcription termination factor. Involved in ATP-dependent release of nascent RNA. Forms a stable complex with single-stranded DNA, and to a lesser extent RNA. The polypeptide is Transcript termination protein A18 (Erythrocebus patas (Red guenon)).